Consider the following 93-residue polypeptide: MQQSLAVKTFEDLFAELGDRARTRPADSTTVAALDGGVHALGKKLLEEAGEVWLAAEHESNDALAEEISQLLYWTQVLMISRGLSLDDVYRKL.

This sequence belongs to the PRA-PH family.

It is found in the cytoplasm. The enzyme catalyses 1-(5-phospho-beta-D-ribosyl)-ATP + H2O = 1-(5-phospho-beta-D-ribosyl)-5'-AMP + diphosphate + H(+). It participates in amino-acid biosynthesis; L-histidine biosynthesis; L-histidine from 5-phospho-alpha-D-ribose 1-diphosphate: step 2/9. The protein is Phosphoribosyl-ATP pyrophosphatase (hisE) of Mycobacterium bovis (strain ATCC BAA-935 / AF2122/97).